The chain runs to 508 residues: MYHLIPFAAILGMTYALSLAIYRLFLSPLAKFPGPKLAAVTGWVETYYQLFYGEGGQFIFLYKEWHQKYGPIIRINPWEVHISDSCFFEILYSTNRPLKKLPHLAKVFDNELSGFSTVSPELHRIRRKAVSHLFSKGEVLKRGAQIQSAMDRLSERLKLDFLGHGNRVICMNDMWSVYTADLIAEYAFGRHYGFIDQPNFEADFTKALVHLLEPTHLAQQFPWLTDILKALPTSVLEFLHPHMAAFNKFKAANQVRIAKANFAKDLSKGGTMFSAIFNSDLPDEEKSIERAHQEALAFAAAGAETVAATLSVASFHLLHDPKIRRRLDEELATVVPDSRSSDASMPSLEILWQLPYLTGIINEALRLSYGSYARIPRTSDTPIQYDEWTIPPGVVFSMDIAPAHHDERIFPDSYSFKPERWLDNPQAFDGKPLTRYLFSFSRGTRSCLGMQLALAEMYIGIVSFFSRFDAHLFETDLTDITFVRDRFAPRPRIGSRGVRVNRLTTRKF.

Heme is bound at residue C447.

This sequence belongs to the cytochrome P450 family. The cofactor is heme.

Its pathway is mycotoxin biosynthesis. In terms of biological role, cytochrome P450 monooxygenase; part of the gene cluster that mediates the biosynthesis of brefeldin A (BFA), a protein transport inhibitor that shows antiviral, antifungal, and antitumor properties. The proposed biosynthesis of BFA involves formation of an acyclic polyketide chain that is differentially tailored throughout the backbone. The highly reducing polyketide synthase Bref-PKS is proposed to synthesize the precisely reduced octaketide precursor, which could then be directly offloaded by the thiohydrolase enzyme Bref-TH followed by a cytochrome P450 monooxygenase-mediated formation of the cyclopentane ring and macrocyclization to afford 7-deoxy BFA. Alternatively, the first ring annulation can also occur on the ACP-tethered intermediate before the thiohydrolase release and lactonization. The C7-hydroxylation by another cytochrome P450 monooxygenase is believed to be the final step in the process to obtain the final structure of BFA. In addition to the HRPKS Bref-PKS and the thiohydrolase Bref-TH, the brefeldin A biosynthesis cluster contains 4 cytochrome p450 monooxygenases (called orf3 to orf6), as well a the probable cluster-specific transcription regulator orf8. In Eupenicillium brefeldianum (Penicillium brefeldianum), this protein is Cytochrome P450 monooxygenase orf4.